Here is a 477-residue protein sequence, read N- to C-terminus: UDP-N-acetylmuramate--L-alanine ligase (477 aa).

Residue 117–123 (GTHGKTT) coordinates ATP.

This sequence belongs to the MurCDEF family.

Its subcellular location is the cytoplasm. It carries out the reaction UDP-N-acetyl-alpha-D-muramate + L-alanine + ATP = UDP-N-acetyl-alpha-D-muramoyl-L-alanine + ADP + phosphate + H(+). It participates in cell wall biogenesis; peptidoglycan biosynthesis. Functionally, cell wall formation. This chain is UDP-N-acetylmuramate--L-alanine ligase, found in Phenylobacterium zucineum (strain HLK1).